Consider the following 309-residue polypeptide: Golgi to ER traffic protein 4 homolog (309 aa).

The tract at residues 290–309 (SGGGLASMEVDGPTIEDEMD) is disordered.

Belongs to the GET4 family.

Its function is as follows. May play a role in insertion of tail-anchored proteins into the endoplasmic reticulum membrane. The sequence is that of Golgi to ER traffic protein 4 homolog from Dictyostelium discoideum (Social amoeba).